A 368-amino-acid chain; its full sequence is Probable endopolygalacturonase I (368 aa).

The first 18 residues, 1 to 18 (MRSVEILGLAALGSLVAA), serve as a signal peptide directing secretion. Positions 19 to 31 (APSPSRVSNSAKK) are excised as a propeptide. Cys-35 and Cys-50 form a disulfide bridge. PbH1 repeat units lie at residues 162–192 (ATNLQLTDITIDNSDGDENGGHNTDAFDIGE) and 193–214 (SNGVYIRGAVVKNQDDCIAINS). Asp-207 acts as the Proton donor in catalysis. A disulfide bond links Cys-209 and Cys-225. Residue His-229 is part of the active site. 3 PbH1 repeats span residues 244–265 (VKNVTITDSTISDSDNGVRIKT), 273–295 (VGDVTYSNIKLSNIAKYGIVIEQ), and 307–328 (TTGVPITGLTIDGITGSVASNA). An N-linked (GlcNAc...) asparagine glycan is attached at Asn-246. Cystine bridges form between Cys-335–Cys-340 and Cys-359–Cys-368.

It belongs to the glycosyl hydrolase 28 family.

Its subcellular location is the secreted. It carries out the reaction (1,4-alpha-D-galacturonosyl)n+m + H2O = (1,4-alpha-D-galacturonosyl)n + (1,4-alpha-D-galacturonosyl)m.. Functionally, involved in maceration and soft-rotting of plant tissue. Hydrolyzes the 1,4-alpha glycosidic bonds of de-esterified pectate in the smooth region of the plant cell wall. The protein is Probable endopolygalacturonase I (pgaI) of Aspergillus clavatus (strain ATCC 1007 / CBS 513.65 / DSM 816 / NCTC 3887 / NRRL 1 / QM 1276 / 107).